The sequence spans 326 residues: MIKIAVDMHGGDNAPDIVLDGIEMFLKEFNDVEIHLYGDEKENRINHPRLTMHHTTDVITMDDEPVRAIRRKKDASMVRAAESVKLKETDAVVSAGNTGALMAAGLFVIGRIKGIERPALALTLPTINDEGFMLLDMGANADAKPEHLVQYAKMASIYAHKNRGISNPSVGLANIGTEDKKGNQLARDTFNLLKEETSINFIGNVESKALLNYAADIVVTDGFTGNMILKTLEGTANNIFKMLKSTLLASTKTKIAAGLIKKDLMQLKNKMDYSEYGGAILFGVDGIVIKAHGSSDKKAFFNALKQVRQSAREDVISLLKQEVTHE.

Belongs to the PlsX family. In terms of assembly, homodimer. Probably interacts with PlsY.

Its subcellular location is the cytoplasm. It catalyses the reaction a fatty acyl-[ACP] + phosphate = an acyl phosphate + holo-[ACP]. It functions in the pathway lipid metabolism; phospholipid metabolism. Functionally, catalyzes the reversible formation of acyl-phosphate (acyl-PO(4)) from acyl-[acyl-carrier-protein] (acyl-ACP). This enzyme utilizes acyl-ACP as fatty acyl donor, but not acyl-CoA. This Macrococcus caseolyticus (strain JCSC5402) (Macrococcoides caseolyticum) protein is Phosphate acyltransferase.